Reading from the N-terminus, the 2350-residue chain is Probable JmjC domain-containing histone demethylation protein 2C (2350 aa).

Disordered stretches follow at residues 96–302 (TRAQ…LQEC) and 314–336 (PKDR…NDTH). Residues 98-127 (AQANSPRPAMNSQAAVPKQNTHQQQQQRSI) show a composition bias toward polar residues. Residues Ser135 and Ser138 each carry the phosphoserine modification. Positions 141 to 160 (DEEKMKEDKYDCVSRGENPK) are enriched in basic and acidic residues. Over residues 161 to 171 (GKNKHVVTKRR) the composition is skewed to basic residues. The segment covering 172–189 (KPEEAEKRLSMKRLRTDN) has biased composition (basic and acidic residues). A compositionally biased stretch (low complexity) spans 190 to 200 (ASDASESSDAE). Phosphoserine is present on residues Ser191 and Ser194. Residues 257–280 (QEDKNHNEGEKPKSTDSHLQDKMT) show a composition bias toward basic and acidic residues. Residues 281 to 302 (LRSSEQATVADHNSNDSVLQEC) are compositionally biased toward polar residues. 2 positions are modified to phosphoserine: Ser294 and Ser320. Thr324 is modified (phosphothreonine). Phosphoserine is present on residues Ser420, Ser436, Ser457, Ser458, Ser460, Ser471, and Ser762. Disordered regions lie at residues 426-486 (SVTE…NSQA), 747-766 (SSAE…PPLT), 859-883 (RENY…DKDV), 1030-1083 (RKES…DQSL), and 1422-1508 (EKVS…VPRS). Low complexity-rich tracts occupy residues 863–874 (SRVVPSSSSPKS) and 1034–1045 (SYSSLSPPTLTP). Positions 1071 to 1083 (SQSNFKNSSDQSL) are enriched in polar residues. Residues 1454–1463 (KRQPKPTYKK) are compositionally biased toward basic residues. The span at 1464–1480 (KQNDLQKRKGEVEEDSK) shows a compositional bias: basic and acidic residues. The C6-type zinc-finger motif lies at 1657-1682 (CDACEATLFNVHWVCRKCGFVACLDC). A compositionally biased stretch (polar residues) spans 1776-1818 (KTSVSLPESQQQNSPQKSQTNGNSSPGSASTDSRLTPPESQSP). The interval 1776–1874 (KTSVSLPESQ…PASQSNEQGS (99 aa)) is disordered. Ser1800 is subject to Phosphoserine. Residues 1826 to 1849 (AEQKSREEKQENKEFTLEREIKED) show a composition bias toward basic and acidic residues. A compositionally biased stretch (polar residues) spans 1855-1874 (SDSPNGSTSPPASQSNEQGS). Residues 1876–1880 (LRDLL) carry the LXXLL motif motif. Positions 1933 to 1962 (PNKTSKINIKSEPNEEPKESSLPATDESNK) are disordered. A Glycyl lysine isopeptide (Lys-Gly) (interchain with G-Cter in SUMO2) cross-link involves residue Lys1942. Positions 2084-2308 (MPTRYEDFLR…QSFHLTQELR (225 aa)) constitute a JmjC domain. Residues His2146, Glu2148, and His2276 each contribute to the Fe cation site.

The protein belongs to the JHDM2 histone demethylase family. The cofactor is Fe(2+).

The protein localises to the nucleus. In terms of biological role, probable histone demethylase that specifically demethylates 'Lys-9' of histone H3, thereby playing a central role in histone code. Demethylation of Lys residue generates formaldehyde and succinate. May be involved in hormone-dependent transcriptional activation, by participating in recruitment to androgen-receptor target genes. The chain is Probable JmjC domain-containing histone demethylation protein 2C (Jmjd1c) from Mus musculus (Mouse).